We begin with the raw amino-acid sequence, 629 residues long: tRNA uridine 5-carboxymethylaminomethyl modification enzyme MnmG (629 aa).

FAD-binding positions include 13–18 (GGGHAG), Val125, and Ser180. 273 to 287 (GPRYCPSIEDKVMRF) is a binding site for NAD(+). An FAD-binding site is contributed by Gln370.

It belongs to the MnmG family. In terms of assembly, homodimer. Heterotetramer of two MnmE and two MnmG subunits. The cofactor is FAD.

It is found in the cytoplasm. In terms of biological role, NAD-binding protein involved in the addition of a carboxymethylaminomethyl (cmnm) group at the wobble position (U34) of certain tRNAs, forming tRNA-cmnm(5)s(2)U34. The chain is tRNA uridine 5-carboxymethylaminomethyl modification enzyme MnmG from Salmonella arizonae (strain ATCC BAA-731 / CDC346-86 / RSK2980).